A 140-amino-acid polypeptide reads, in one-letter code: ATP synthase epsilon chain (140 aa).

This sequence belongs to the ATPase epsilon chain family. In terms of assembly, F-type ATPases have 2 components, CF(1) - the catalytic core - and CF(0) - the membrane proton channel. CF(1) has five subunits: alpha(3), beta(3), gamma(1), delta(1), epsilon(1). CF(0) has three main subunits: a, b and c.

It localises to the cell inner membrane. Its function is as follows. Produces ATP from ADP in the presence of a proton gradient across the membrane. The chain is ATP synthase epsilon chain from Nitrosomonas eutropha (strain DSM 101675 / C91 / Nm57).